Consider the following 118-residue polypeptide: ATP synthase subunit g, mitochondrial (118 aa).

It belongs to the ATPase g subunit family. F-type ATPases have 2 components, CF(1) - the catalytic core - and CF(0) - the membrane proton channel.

The protein localises to the mitochondrion membrane. In terms of biological role, mitochondrial membrane ATP synthase (F(1)F(0) ATP synthase or Complex V) produces ATP from ADP in the presence of a proton gradient across the membrane which is generated by electron transport complexes of the respiratory chain. F-type ATPases consist of two structural domains, F(1) - containing the extramembraneous catalytic core, and F(0) - containing the membrane proton channel, linked together by a central stalk and a peripheral stalk. During catalysis, ATP synthesis in the catalytic domain of F(1) is coupled via a rotary mechanism of the central stalk subunits to proton translocation. Part of the complex F(0) domain. Minor subunit located with subunit a in the membrane. The protein is ATP synthase subunit g, mitochondrial (atp20) of Schizosaccharomyces pombe (strain 972 / ATCC 24843) (Fission yeast).